The following is a 395-amino-acid chain: ATP synthase subunit beta, chloroplastic (395 aa).

72 to 79 (GGAGVGKT) is a binding site for ATP.

The protein belongs to the ATPase alpha/beta chains family. In terms of assembly, F-type ATPases have 2 components, CF(1) - the catalytic core - and CF(0) - the membrane proton channel. CF(1) has five subunits: alpha(3), beta(3), gamma(1), delta(1), epsilon(1). CF(0) has four main subunits: a(1), b(1), b'(1) and c(9-12).

It is found in the plastid. The protein localises to the chloroplast thylakoid membrane. The enzyme catalyses ATP + H2O + 4 H(+)(in) = ADP + phosphate + 5 H(+)(out). Functionally, produces ATP from ADP in the presence of a proton gradient across the membrane. The catalytic sites are hosted primarily by the beta subunits. In Blechnum occidentale (Hammock fern), this protein is ATP synthase subunit beta, chloroplastic.